The following is a 975-amino-acid chain: Glycine dehydrogenase (decarboxylating) (975 aa).

Lysine 723 bears the N6-(pyridoxal phosphate)lysine mark.

The protein belongs to the GcvP family. In terms of assembly, the glycine cleavage system is composed of four proteins: P, T, L and H. It depends on pyridoxal 5'-phosphate as a cofactor.

It catalyses the reaction N(6)-[(R)-lipoyl]-L-lysyl-[glycine-cleavage complex H protein] + glycine + H(+) = N(6)-[(R)-S(8)-aminomethyldihydrolipoyl]-L-lysyl-[glycine-cleavage complex H protein] + CO2. Functionally, the glycine cleavage system catalyzes the degradation of glycine. The P protein binds the alpha-amino group of glycine through its pyridoxal phosphate cofactor; CO(2) is released and the remaining methylamine moiety is then transferred to the lipoamide cofactor of the H protein. This is Glycine dehydrogenase (decarboxylating) from Burkholderia ambifaria (strain MC40-6).